The chain runs to 333 residues: Bifunctional phosphoglucose/phosphomannose isomerase (333 aa).

Residues 22–160 (LEGALEGVEE…SGALGVDLEA (139 aa)) form the SIS domain. D-fructose 6-phosphate contacts are provided by glycine 39, serine 40, serine 84, serine 86, threonine 89, and arginine 136. The Proton acceptor role is filled by glutamate 211. Residues histidine 227 and lysine 322 each coordinate D-fructose 6-phosphate. The active-site Proton donor is histidine 227. The active-site Proton acceptor is lysine 322.

It belongs to the PGI/PMI family. Homodimer.

The enzyme catalyses alpha-D-glucose 6-phosphate = beta-D-fructose 6-phosphate. It catalyses the reaction D-mannose 6-phosphate = D-fructose 6-phosphate. With respect to regulation, inhibited by low concentrations of erythrose 4-phosphate and 6-phosphogluconate. Functionally, dual specificity isomerase that catalyzes the isomerization of both glucose-6-phosphate and mannose-6-phosphate to fructose-6-phosphate with similar catalytic efficiency. The chain is Bifunctional phosphoglucose/phosphomannose isomerase from Aeropyrum pernix (strain ATCC 700893 / DSM 11879 / JCM 9820 / NBRC 100138 / K1).